The following is a 407-amino-acid chain: Prolyl hydroxylase EGLN2 (407 aa).

Low complexity-rich tracts occupy residues 1-24 (MDSPCQPQPLSQALPQLPGSSSEP) and 57-75 (ASAGSGTPRATATSTTASP). 3 disordered regions span residues 1 to 34 (MDSPCQPQPLSQALPQLPGSSSEPLEPEPGRARM), 50 to 89 (CPGVPSEASAGSGTPRATATSTTASPLRDGFGGQDGGELR), and 108 to 157 (AAQG…CSSG). The Bipartite nuclear localization signal motif lies at 89-134 (RPLQSEGAAALVTKGCQRLAAQGARPEAPKRKWAEDGGDAPSPSKR). Ser130 carries the phosphoserine modification. The beta(2)beta(3) 'finger-like' loop stretch occupies residues 225-235 (VSQRAIPPRSI). One can recognise a Fe2OG dioxygenase domain in the interval 278–376 (GRTKAMVACY…RYAITVWYFD (99 aa)). Fe cation-binding residues include His297, Asp299, and His358. A 2-oxoglutarate-binding site is contributed by Arg367.

In terms of assembly, interacts (preferably isoform p40) with SIAH2; the interaction targets both SIAH2 isoforms for proteasomal degradation in vitro. Interacts with LIMD1, WTIP and AJUBA. It depends on Fe(2+) as a cofactor. L-ascorbate is required as a cofactor. Post-translationally, ubiquitinated by SIAH1 and/or SIAH2 in response to the unfolded protein response (UPR), leading to its degradation. As to expression, expressed in adult and fetal heart, brain, liver, lung, skeletal muscle, and kidney. Also expressed in testis and placenta. Highest levels in adult brain, placenta, lung, kidney, and testis. Expressed in hormone responsive tissues, including normal and cancerous mammary, ovarian and prostate epithelium.

Its subcellular location is the nucleus. It carries out the reaction L-prolyl-[protein] + 2-oxoglutarate + O2 = trans-4-hydroxy-L-prolyl-[protein] + succinate + CO2. It catalyses the reaction L-prolyl-[hypoxia-inducible factor alpha subunit] + 2-oxoglutarate + O2 = trans-4-hydroxy-L-prolyl-[hypoxia-inducible factor alpha subunit] + succinate + CO2. In terms of biological role, prolyl hydroxylase that mediates hydroxylation of proline residues in target proteins, such as ATF4, IKBKB, CEP192 and HIF1A. Target proteins are preferentially recognized via a LXXLAP motif. Cellular oxygen sensor that catalyzes, under normoxic conditions, the post-translational formation of 4-hydroxyproline in hypoxia-inducible factor (HIF) alpha proteins. Hydroxylates a specific proline found in each of the oxygen-dependent degradation (ODD) domains (N-terminal, NODD, and C-terminal, CODD) of HIF1A. Also hydroxylates HIF2A. Has a preference for the CODD site for both HIF1A and HIF2A. Hydroxylated HIFs are then targeted for proteasomal degradation via the von Hippel-Lindau ubiquitination complex. Under hypoxic conditions, the hydroxylation reaction is attenuated allowing HIFs to escape degradation resulting in their translocation to the nucleus, heterodimerization with HIF1B, and increased expression of hypoxy-inducible genes. EGLN2 is involved in regulating hypoxia tolerance and apoptosis in cardiac and skeletal muscle. Also regulates susceptibility to normoxic oxidative neuronal death. Links oxygen sensing to cell cycle and primary cilia formation by hydroxylating the critical centrosome component CEP192 which promotes its ubiquitination and subsequent proteasomal degradation. Hydroxylates IKBKB, mediating NF-kappa-B activation in hypoxic conditions. Also mediates hydroxylation of ATF4, leading to decreased protein stability of ATF4. The protein is Prolyl hydroxylase EGLN2 of Homo sapiens (Human).